The sequence spans 283 residues: Glutamate racemase (283 aa).

Substrate-binding positions include 28 to 29 (DS) and 60 to 61 (YG). The active-site Proton donor/acceptor is cysteine 92. 93–94 (NT) contributes to the substrate binding site. Cysteine 204 functions as the Proton donor/acceptor in the catalytic mechanism. A substrate-binding site is contributed by 205–206 (TH).

It belongs to the aspartate/glutamate racemases family.

The catalysed reaction is L-glutamate = D-glutamate. The protein operates within cell wall biogenesis; peptidoglycan biosynthesis. In terms of biological role, provides the (R)-glutamate required for cell wall biosynthesis. This is Glutamate racemase from Klebsiella pneumoniae (strain 342).